We begin with the raw amino-acid sequence, 659 residues long: MPVGGLLPLFSSPAGGGLGGGLGGGLGGGGGGGGRKGSGPSAFRLTEKFVLLLVFSAFITLCFGAIFFLPDSSKLLSGVLFHSSPALQPAADHKPGPGARAEDAADGRARPGEEGAPGDPAAALEDNLARIRENHERALMEAKETLQKLPEEIQRDILMEKEKVAQDQMSNRMGFRLPPVYLVPLIGAIDREPADAAVREKRAKIKEMMKHAWNNYKLYAWGKNELKPVSKGGHSSSLFGNIKGATIVDALDTLFIMKMKNEFEEAKAWVEEHLNFNVNAEVSVFEVNIRFIGGLISAYYLSGEEIFRKKAVELGVKLLPAFYTPSGIPWALLNIKSGIGRNWPWASGGSSILAEFGTLHLEFIHLSYLSGNPFFAEKVMNIRKVLNNLEKPQGLYPNYLNPNSGQWGQYHVSVGGLGDSFYEYLLKAWLMSDKTDLEAKKMYFDAIKAIETHLIRKSRNGLTYIAEWKGGLLEHKMGHLTCFAGGMFALGADDAPDGLTQHYLQLGAEIARTCHESYSRTFVKLGPEAFRFDGGVEAIATRQNEKYYILRPEVVETYLYMWRLTHDPKYRKWAWEAVEALEKHCRVNGGYSGLRDVYVSAQTYDDVQQSFFLAETLKYLYLIFSDDDLLPLEHWIFNTEAHPLPVLSRNIKKVEDNEK.

Topologically, residues 1–48 (MPVGGLLPLFSSPAGGGLGGGLGGGLGGGGGGGGRKGSGPSAFRLTEK) are cytoplasmic. Residues 49–69 (FVLLLVFSAFITLCFGAIFFL) form a helical; Signal-anchor for type II membrane protein membrane-spanning segment. At 70–659 (PDSSKLLSGV…NIKKVEDNEK (590 aa)) the chain is on the lumenal side. The interval 88–121 (QPAADHKPGPGARAEDAADGRARPGEEGAPGDPA) is disordered. Over residues 91–113 (ADHKPGPGARAEDAADGRARPGE) the composition is skewed to basic and acidic residues. Cys482 and Cys514 form a disulfide bridge. Glu528 functions as the Proton donor in the catalytic mechanism. Thr639 lines the Ca(2+) pocket.

This sequence belongs to the glycosyl hydrolase 47 family. Requires Ca(2+) as cofactor.

It is found in the endoplasmic reticulum membrane. The catalysed reaction is N(4)-(alpha-D-Man-(1-&gt;2)-alpha-D-Man-(1-&gt;2)-alpha-D-Man-(1-&gt;3)-[alpha-D-Man-(1-&gt;2)-alpha-D-Man-(1-&gt;3)-[alpha-D-Man-(1-&gt;2)-alpha-D-Man-(1-&gt;6)]-alpha-D-Man-(1-&gt;6)]-beta-D-Man-(1-&gt;4)-beta-D-GlcNAc-(1-&gt;4)-beta-D-GlcNAc)-L-asparaginyl-[protein] (N-glucan mannose isomer 9A1,2,3B1,2,3) + 4 H2O = N(4)-(alpha-D-Man-(1-&gt;3)-[alpha-D-Man-(1-&gt;3)-[alpha-D-Man-(1-&gt;6)]-alpha-D-Man-(1-&gt;6)]-beta-D-Man-(1-&gt;4)-beta-D-GlcNAc-(1-&gt;4)-beta-D-GlcNAc)-L-asparaginyl-[protein] (N-glucan mannose isomer 5A1,2) + 4 beta-D-mannose. The enzyme catalyses N(4)-(alpha-D-Man-(1-&gt;2)-alpha-D-Man-(1-&gt;2)-alpha-D-Man-(1-&gt;3)-[alpha-D-Man-(1-&gt;3)-[alpha-D-Man-(1-&gt;2)-alpha-D-Man-(1-&gt;6)]-alpha-D-Man-(1-&gt;6)]-beta-D-Man-(1-&gt;4)-beta-D-GlcNAc-(1-&gt;4)-beta-D-GlcNAc)-L-asparaginyl-[protein] (N-glucan mannose isomer 8A1,2,3B1,3) + 3 H2O = N(4)-(alpha-D-Man-(1-&gt;3)-[alpha-D-Man-(1-&gt;3)-[alpha-D-Man-(1-&gt;6)]-alpha-D-Man-(1-&gt;6)]-beta-D-Man-(1-&gt;4)-beta-D-GlcNAc-(1-&gt;4)-beta-D-GlcNAc)-L-asparaginyl-[protein] (N-glucan mannose isomer 5A1,2) + 3 beta-D-mannose. It functions in the pathway protein modification; protein glycosylation. Inhibited by both 1-deoxymannojirimycin and kifunensine. Its function is as follows. Involved in the maturation of Asn-linked oligosaccharides. Progressively trim alpha-1,2-linked mannose residues from Man(9)GlcNAc(2) to produce Man(5)GlcNAc(2). In Sus scrofa (Pig), this protein is Mannosyl-oligosaccharide 1,2-alpha-mannosidase IA (MAN1A1).